We begin with the raw amino-acid sequence, 528 residues long: Glycerol kinase 5 (528 aa).

Serine 28 and serine 29 together coordinate ATP. Arginine 98, aspartate 275, and glutamine 276 together coordinate glycerol. The ATP site is built by threonine 297, glycine 340, and glycine 440.

Belongs to the FGGY kinase family.

It is found in the cytoplasm. The enzyme catalyses glycerol + ATP = sn-glycerol 3-phosphate + ADP + H(+). The protein operates within polyol metabolism; glycerol degradation via glycerol kinase pathway; sn-glycerol 3-phosphate from glycerol: step 1/1. Skin-specific kinase that plays a key role in glycerol metabolism, catalyzing its phosphorylation to produce sn-glycerol 3-phosphate. Involved in skin-specific regulation of sterol regulatory element-binding protein (SREBP) processing and lipid biosynthesis. This is Glycerol kinase 5 (GK5) from Bos taurus (Bovine).